Here is a 333-residue protein sequence, read N- to C-terminus: Leucine carboxyl methyltransferase 1 (333 aa).

S-adenosyl-L-methionine contacts are provided by residues Arg-79, Gly-108, Asp-131, 180-181, and Glu-206; that span reads NV.

The protein belongs to the methyltransferase superfamily. LCMT family.

The catalysed reaction is [phosphatase 2A protein]-C-terminal L-leucine + S-adenosyl-L-methionine = [phosphatase 2A protein]-C-terminal L-leucine methyl ester + S-adenosyl-L-homocysteine. Methylates the carboxyl group of the C-terminal leucine residue of protein phosphatase 2A catalytic subunits to form alpha-leucine ester residues. The protein is Leucine carboxyl methyltransferase 1 (PPM1) of Kluyveromyces lactis (strain ATCC 8585 / CBS 2359 / DSM 70799 / NBRC 1267 / NRRL Y-1140 / WM37) (Yeast).